The chain runs to 273 residues: MSDVTHANGAVANEADDALVIGDHSFSSRILVGTSRYPNPQVMLDALEATGTELVTVAIRRVNIENPAPESHLDLLRRGGYEVLPNTAGCYTAREAVLTARLAREALGTDLLKLEVIGDDETLMPDVEQLLDAAKTLVDDGFTVLAYANDDPITCRKLADLGCAAVMPLGSPIGSGMGIVNPYNLRIIREMIEDTPLIVDAGIGTASDAVTAMELGYDGILVNTAIAQAQHPVDMGRAMRKAVEAGRSAHRAGRIPRRLYAEASSSMEGRIGT.

Lysine 113 functions as the Schiff-base intermediate with DXP in the catalytic mechanism. 1-deoxy-D-xylulose 5-phosphate contacts are provided by residues glycine 174, alanine 201–glycine 202, and asparagine 223–threonine 224.

The protein belongs to the ThiG family. Homotetramer. Forms heterodimers with either ThiH or ThiS.

The protein localises to the cytoplasm. The catalysed reaction is [ThiS sulfur-carrier protein]-C-terminal-Gly-aminoethanethioate + 2-iminoacetate + 1-deoxy-D-xylulose 5-phosphate = [ThiS sulfur-carrier protein]-C-terminal Gly-Gly + 2-[(2R,5Z)-2-carboxy-4-methylthiazol-5(2H)-ylidene]ethyl phosphate + 2 H2O + H(+). It participates in cofactor biosynthesis; thiamine diphosphate biosynthesis. Catalyzes the rearrangement of 1-deoxy-D-xylulose 5-phosphate (DXP) to produce the thiazole phosphate moiety of thiamine. Sulfur is provided by the thiocarboxylate moiety of the carrier protein ThiS. In vitro, sulfur can be provided by H(2)S. In Salinibacter ruber (strain DSM 13855 / M31), this protein is Thiazole synthase.